A 91-amino-acid chain; its full sequence is Small nuclear ribonucleoprotein F (91 aa).

A Sm domain is found at A8–E81.

The protein belongs to the snRNP Sm proteins family. SmF/LSm6 subfamily. As to quaternary structure, core component of the spliceosomal U1, U2, U4 and U5 small nuclear ribonucleoproteins (snRNPs), the building blocks of the spliceosome. Most spliceosomal snRNPs contain a common set of Sm proteins, SNRPB, SNRPD1, SNRPD2, SNRPD3, SNRPE, SNRPF and SNRPG that assemble in a heptameric protein ring on the Sm site of the small nuclear RNA to form the core snRNP. Component of the U1 snRNP. Component of the U4/U6-U5 tri-snRNP complex. Component of the U7 snRNP complex. Component of the U11/U12 snRNPs that are part of the U12-type spliceosome. Part of the SMN-Sm complex that catalyzes core snRNPs assembly.

The protein localises to the cytoplasm. Its subcellular location is the cytosol. It localises to the nucleus. In terms of biological role, plays a role in pre-mRNA splicing as a core component of the spliceosomal U1, U2, U4 and U5 small nuclear ribonucleoproteins (snRNPs), the building blocks of the spliceosome. Component of both the pre-catalytic spliceosome B complex and activated spliceosome C complexes. Is also a component of the minor U12 spliceosome. The protein is Small nuclear ribonucleoprotein F (snrpf) of Dictyostelium discoideum (Social amoeba).